Reading from the N-terminus, the 143-residue chain is Peptide methionine sulfoxide reductase MsrB (143 aa).

Positions 5-126 (KEEKIKSLNR…NSAALRFVPK (122 aa)) constitute a MsrB domain. The active-site Nucleophile is the Cys-115.

It belongs to the MsrB Met sulfoxide reductase family.

The catalysed reaction is L-methionyl-[protein] + [thioredoxin]-disulfide + H2O = L-methionyl-(R)-S-oxide-[protein] + [thioredoxin]-dithiol. The chain is Peptide methionine sulfoxide reductase MsrB from Bacillus subtilis (strain 168).